The primary structure comprises 1068 residues: Protein AF-10 (1068 aa).

The PHD-type 1 zinc-finger motif lies at 22-74; it reads IGGCCVCSDERGWAENPLVYCDGHGCSVAVHQACYGIVQVPTGPWFCRKCESQ. The C2HC pre-PHD-type zinc finger occupies 79–112; that stretch reads RVRCELCPHKDGALKRTDNGGWAHVVCALYIPEV. The tract at residues 106–190 is required for interaction with histone H3; sequence ALYIPEVQFA…EGNGADNVQY (85 aa). A PHD-type 2 zinc finger spans residues 135–198; it reads KTCYICDEQG…QYCGYCKYHF (64 aa). The disordered stretch occupies residues 207-260; the sequence is GSNRSYEQSLSDSSSHSQDKHHEKEKKKYKEKDKHKQKHKKQPEPSPALVPSLT. Phosphoserine is present on S217. Basic and acidic residues predominate over residues 223–240; sequence SQDKHHEKEKKKYKEKDK. Residue S252 is modified to Phosphoserine. K280 participates in a covalent cross-link: Glycyl lysine isopeptide (Lys-Gly) (interchain with G-Cter in SUMO2). Residues 296–305 show a composition bias toward polar residues; it reads EVSAHTSSGK. Disordered stretches follow at residues 296 to 416 and 428 to 506; these read EVSA…SFSS and SQPK…SVAS. Positions 306-317 are enriched in basic and acidic residues; that stretch reads DVSEARGSEGKG. A compositionally biased stretch (polar residues) spans 340–351; it reads TAVSASSPFPQG. Over residues 352-372 the composition is skewed to low complexity; it reads SFSGTPGSVKSSSGSSVQSPQ. 3 stretches are compositionally biased toward polar residues: residues 387–396, 404–416, and 428–446; these read YTHTQQPSST, SGSQ…SFSS, and SQPK…SSLP. S436 is subject to Phosphoserine. Over residues 465-483 the composition is skewed to basic residues; that stretch reads EKKRKGNKQSKHGPGRPKG. The segment covering 490–506 has biased composition (low complexity); sequence VSHLSVSSASPTSSVAS. Position 532 is a phosphoserine (S532). The segment covering 583–594 has biased composition (low complexity); sequence SGSGSSTPVSSS. Disordered stretches follow at residues 583–613 and 660–698; these read SGSG…LSPS and SESS…NLQL. Residues 595 to 604 show a composition bias toward polar residues; it reads HIPQQSSGHL. Residues 681–692 are compositionally biased toward low complexity; the sequence is SSPRGSLSPRSP. Phosphoserine occurs at positions 686, 688, and 691. The interval 752 to 780 is leucine-zipper; it reads LQVENRRLEEQIKNLTAKKERLQLLNAQL. 2 disordered regions span residues 786–869 and 1040–1068; these read AITT…VSGV and PFLT…QEKS. The span at 787 to 816 shows a compositional bias: polar residues; it reads ITTNPSPSHQMHTYTAQTAPPPDSLNSSKS. 2 stretches are compositionally biased toward low complexity: residues 836–850 and 857–869; these read LTSS…SALS and QSPA…VSGV. Over residues 1040–1054 the composition is skewed to polar residues; it reads PFLTIHGDSTSQKVT.

As to quaternary structure, self-associates. Interacts with FSTL3; the interaction enhances MLLT10 in vitro transcriptional activity and self-association. Interacts with YEATS4. Interacts with SS18. Interacts with DOT1L. Interacts with histone H3; interaction is necessary for MLLT10 binding to nucleosomes; interaction is inhibited by histone H3 'Lys-27' methylations (H3K27me1, H3K27me2 and H3K27me3) amd acetylation; interaction stabilizes association of MLLT10 at chromatin; interaction is essential for histone H3 'Lys-79' dimethylation (H3K79me2).

It localises to the nucleus. In terms of biological role, probably involved in transcriptional regulation. Binds to cruciform DNA. In cells, binding to unmodified histone H3 regulates DOT1L functions including histone H3 'Lys-79' dimethylation (H3K79me2) and gene activation. This chain is Protein AF-10, found in Mus musculus (Mouse).